The sequence spans 151 residues: SsrA-binding protein (151 aa).

The tract at residues 124 to 151 (GKKLHDKRESEKERDWNRQKSRLLKAHG) is disordered. Residues 129-141 (DKRESEKERDWNR) show a composition bias toward basic and acidic residues. Residues 142–151 (QKSRLLKAHG) are compositionally biased toward basic residues.

Belongs to the SmpB family.

It localises to the cytoplasm. In terms of biological role, required for rescue of stalled ribosomes mediated by trans-translation. Binds to transfer-messenger RNA (tmRNA), required for stable association of tmRNA with ribosomes. tmRNA and SmpB together mimic tRNA shape, replacing the anticodon stem-loop with SmpB. tmRNA is encoded by the ssrA gene; the 2 termini fold to resemble tRNA(Ala) and it encodes a 'tag peptide', a short internal open reading frame. During trans-translation Ala-aminoacylated tmRNA acts like a tRNA, entering the A-site of stalled ribosomes, displacing the stalled mRNA. The ribosome then switches to translate the ORF on the tmRNA; the nascent peptide is terminated with the 'tag peptide' encoded by the tmRNA and targeted for degradation. The ribosome is freed to recommence translation, which seems to be the essential function of trans-translation. This Rhizobium johnstonii (strain DSM 114642 / LMG 32736 / 3841) (Rhizobium leguminosarum bv. viciae) protein is SsrA-binding protein.